The sequence spans 214 residues: UPF0502 protein Spro_2794 (214 aa).

It belongs to the UPF0502 family.

The sequence is that of UPF0502 protein Spro_2794 from Serratia proteamaculans (strain 568).